A 316-amino-acid polypeptide reads, in one-letter code: ATP synthase gamma chain (316 aa).

Belongs to the ATPase gamma chain family. As to quaternary structure, F-type ATPases have 2 components, CF(1) - the catalytic core - and CF(0) - the membrane proton channel. CF(1) has five subunits: alpha(3), beta(3), gamma(1), delta(1), epsilon(1). CF(0) has three main subunits: a, b and c.

The protein resides in the cellular thylakoid membrane. Produces ATP from ADP in the presence of a proton gradient across the membrane. The gamma chain is believed to be important in regulating ATPase activity and the flow of protons through the CF(0) complex. This is ATP synthase gamma chain from Prochlorococcus marinus (strain MIT 9211).